Reading from the N-terminus, the 492-residue chain is Cobyric acid synthase (492 aa).

Residues valine 253–alanine 441 form the GATase cobBQ-type domain. The Nucleophile role is filled by cysteine 334. Histidine 433 is an active-site residue.

The protein belongs to the CobB/CobQ family. CobQ subfamily.

Its pathway is cofactor biosynthesis; adenosylcobalamin biosynthesis. Catalyzes amidations at positions B, D, E, and G on adenosylcobyrinic A,C-diamide. NH(2) groups are provided by glutamine, and one molecule of ATP is hydrogenolyzed for each amidation. The sequence is that of Cobyric acid synthase from Azoarcus sp. (strain BH72).